A 92-amino-acid chain; its full sequence is uncharacterized protein (92 aa).

This sequence belongs to the IUNH family.

This is an uncharacterized protein from Corynebacterium ammoniagenes (Brevibacterium ammoniagenes).